A 369-amino-acid polypeptide reads, in one-letter code: Maltose/maltodextrin import ATP-binding protein MalK (369 aa).

One can recognise an ABC transporter domain in the interval 4 to 234; sequence VQLRNVTKAW…PADRFVAGFI (231 aa). 36–43 is a binding site for ATP; sequence GPSGCGKS.

It belongs to the ABC transporter superfamily. Maltooligosaccharide importer (TC 3.A.1.1.1) family. In terms of assembly, the complex is composed of two ATP-binding proteins (MalK), two transmembrane proteins (MalG and MalK) and a solute-binding protein (MalE).

The protein localises to the cell inner membrane. The enzyme catalyses D-maltose(out) + ATP + H2O = D-maltose(in) + ADP + phosphate + H(+). Its function is as follows. Part of the ABC transporter complex MalEFGK involved in maltose/maltodextrin import. Responsible for energy coupling to the transport system. This chain is Maltose/maltodextrin import ATP-binding protein MalK, found in Salmonella typhi.